The primary structure comprises 318 residues: Ribose-phosphate pyrophosphokinase 1 (318 aa).

Arginine 96–aspartate 101 provides a ligand contact to ATP. Mg(2+) is bound by residues aspartate 128, histidine 130, aspartate 139, and aspartate 143. ATP is bound at residue histidine 130. The tract at residues lysine 212 to glycine 227 is binding of phosphoribosylpyrophosphate.

The protein belongs to the ribose-phosphate pyrophosphokinase family. As to quaternary structure, homodimer. The active form is probably a hexamer composed of 3 homodimers. Mg(2+) serves as cofactor.

The catalysed reaction is D-ribose 5-phosphate + ATP = 5-phospho-alpha-D-ribose 1-diphosphate + AMP + H(+). Its pathway is metabolic intermediate biosynthesis; 5-phospho-alpha-D-ribose 1-diphosphate biosynthesis; 5-phospho-alpha-D-ribose 1-diphosphate from D-ribose 5-phosphate (route I): step 1/1. Its activity is regulated as follows. Activated by magnesium and inorganic phosphate. Its function is as follows. Catalyzes the synthesis of phosphoribosylpyrophosphate (PRPP) that is essential for nucleotide synthesis. This Bos taurus (Bovine) protein is Ribose-phosphate pyrophosphokinase 1 (PRPS1).